Consider the following 111-residue polypeptide: Dormancy-associated protein 1 (111 aa).

The tract at residues 30-60 (KDDGASNQLMRSTSIPTTPTTPVTPTTPSSA) is disordered. The span at 41 to 59 (STSIPTTPTTPVTPTTPSS) shows a compositional bias: low complexity.

Belongs to the DRM1/ARP family. As to expression, expressed in axilary buds and in non-growing stems and roots. Detected in sepals, stamens and carpels, but barely detected in petals or leaflets.

The polypeptide is Dormancy-associated protein 1 (Pisum sativum (Garden pea)).